A 66-amino-acid chain; its full sequence is MSLELLSQLETKIQATLENIELLKMELEEEKQKSTQLAEKNQKLQQDLNSWSDKVNGLVGLLNSEI.

Positions 3–59 form a coiled coil; that stretch reads LELLSQLETKIQATLENIELLKMELEEEKQKSTQLAEKNQKLQQDLNSWSDKVNGLV.

It belongs to the ZapB family. In terms of assembly, homodimer. The ends of the coiled-coil dimer bind to each other, forming polymers. Interacts with FtsZ.

It is found in the cytoplasm. Functionally, non-essential, abundant cell division factor that is required for proper Z-ring formation. It is recruited early to the divisome by direct interaction with FtsZ, stimulating Z-ring assembly and thereby promoting cell division earlier in the cell cycle. Its recruitment to the Z-ring requires functional FtsA or ZipA. The polypeptide is Cell division protein ZapB (Shewanella denitrificans (strain OS217 / ATCC BAA-1090 / DSM 15013)).